The following is a 329-amino-acid chain: Ribonucleoside-diphosphate reductase subunit beta (329 aa).

D66, E97, and H101 together coordinate Fe cation. The active site involves Y105. 3 residues coordinate Fe cation: E164, E198, and H201.

Belongs to the ribonucleoside diphosphate reductase small chain family. In terms of assembly, tetramer of two alpha and two beta subunits. The cofactor is Fe cation.

The catalysed reaction is a 2'-deoxyribonucleoside 5'-diphosphate + [thioredoxin]-disulfide + H2O = a ribonucleoside 5'-diphosphate + [thioredoxin]-dithiol. Its function is as follows. Provides the precursors necessary for DNA synthesis. Catalyzes the biosynthesis of deoxyribonucleotides from the corresponding ribonucleotides. The protein is Ribonucleoside-diphosphate reductase subunit beta (bnrdF) of Bacillus pumilus (Bacillus mesentericus).